The sequence spans 177 residues: FANCD2 opposite strand protein (177 aa).

This Homo sapiens (Human) protein is FANCD2 opposite strand protein (FANCD2OS).